Here is a 234-residue protein sequence, read N- to C-terminus: bZIP transcription factor 27 (234 aa).

Residues 152–159 carry the Nuclear localization signal motif; the sequence is KKRGQDSD. Positions 163–213 constitute a bZIP domain; the sequence is GDRRYKRMIKNRESAARSRARKQAYTNELELEIAHLQTENARLKIQQEQLK. A basic motif region spans residues 165–184; the sequence is RRYKRMIKNRESAARSRARK. A leucine-zipper region spans residues 191–212; it reads LELEIAHLQTENARLKIQQEQL. Thr231 carries the post-translational modification Phosphothreonine.

Belongs to the bZIP family. Self-interacts. Interacts with FT and FD/BZIP14. Interacts with CPK33. Phosphorylated. In terms of tissue distribution, expressed on the flanks of the shoot apex.

Its subcellular location is the nucleus. In terms of biological role, transcription factor required for the transition to flowering promoted by FT. This is bZIP transcription factor 27 from Arabidopsis thaliana (Mouse-ear cress).